The chain runs to 188 residues: dCTP deaminase (188 aa).

DCTP contacts are provided by residues 111 to 116 (KSTYAR), 135 to 137 (TLE), Q156, Y170, and Q180. E137 serves as the catalytic Proton donor/acceptor.

Belongs to the dCTP deaminase family. In terms of assembly, homotrimer.

It carries out the reaction dCTP + H2O + H(+) = dUTP + NH4(+). It functions in the pathway pyrimidine metabolism; dUMP biosynthesis; dUMP from dCTP (dUTP route): step 1/2. Catalyzes the deamination of dCTP to dUTP. The sequence is that of dCTP deaminase from Paracidovorax citrulli (strain AAC00-1) (Acidovorax citrulli).